Reading from the N-terminus, the 129-residue chain is MAKPAARPRKKIKKTVVDGIAHIHASFNNTIVTITDRQGNALSWATSGGSGFRGSRKSTPFAAQIAAERAGQAALEYGLKNLDVNVKGPGPGRESAVRALNSCGYKIASITDVTPIPHNGCRPPKKRRV.

Belongs to the universal ribosomal protein uS11 family. In terms of assembly, part of the 30S ribosomal subunit. Interacts with proteins S7 and S18. Binds to IF-3.

Located on the platform of the 30S subunit, it bridges several disparate RNA helices of the 16S rRNA. Forms part of the Shine-Dalgarno cleft in the 70S ribosome. The polypeptide is Small ribosomal subunit protein uS11 (Pseudomonas putida (strain GB-1)).